We begin with the raw amino-acid sequence, 261 residues long: 14-3-3 protein 8 (261 aa).

The disordered stretch occupies residues 237–261; it reads DIPEDGEEAPKGDAANKVGAGEDAE.

The protein belongs to the 14-3-3 family. As to quaternary structure, homodimer.

In Solanum lycopersicum (Tomato), this protein is 14-3-3 protein 8 (TFT8).